The chain runs to 143 residues: Transcriptional regulator MraZ (143 aa).

2 SpoVT-AbrB domains span residues 5-47 (TYTP…PRDE) and 76-119 (TDEQ…DAQA).

This sequence belongs to the MraZ family. Forms oligomers.

It is found in the cytoplasm. It localises to the nucleoid. This chain is Transcriptional regulator MraZ, found in Mycolicibacterium smegmatis (strain ATCC 700084 / mc(2)155) (Mycobacterium smegmatis).